Reading from the N-terminus, the 322-residue chain is Anthranilate phosphoribosyltransferase (322 aa).

5-phospho-alpha-D-ribose 1-diphosphate contacts are provided by residues glycine 71, glycine 74–aspartate 75, threonine 79, asparagine 81–threonine 84, lysine 99–glycine 107, and alanine 111. Glycine 71 contacts anthranilate. Serine 83 lines the Mg(2+) pocket. Asparagine 102 is a binding site for anthranilate. Residue arginine 157 coordinates anthranilate. Residues aspartate 215 and glutamate 216 each coordinate Mg(2+).

The protein belongs to the anthranilate phosphoribosyltransferase family. As to quaternary structure, homodimer. Mg(2+) serves as cofactor.

It catalyses the reaction N-(5-phospho-beta-D-ribosyl)anthranilate + diphosphate = 5-phospho-alpha-D-ribose 1-diphosphate + anthranilate. The protein operates within amino-acid biosynthesis; L-tryptophan biosynthesis; L-tryptophan from chorismate: step 2/5. Catalyzes the transfer of the phosphoribosyl group of 5-phosphorylribose-1-pyrophosphate (PRPP) to anthranilate to yield N-(5'-phosphoribosyl)-anthranilate (PRA). This chain is Anthranilate phosphoribosyltransferase, found in Thermoplasma acidophilum (strain ATCC 25905 / DSM 1728 / JCM 9062 / NBRC 15155 / AMRC-C165).